Here is a 214-residue protein sequence, read N- to C-terminus: A-type ATP synthase subunit D (214 aa).

Belongs to the V-ATPase D subunit family. Has multiple subunits with at least A(3), B(3), C, D, E, F, H, I and proteolipid K(x).

The protein localises to the cell membrane. Component of the A-type ATP synthase that produces ATP from ADP in the presence of a proton gradient across the membrane. The protein is A-type ATP synthase subunit D of Thermococcus sibiricus (strain DSM 12597 / MM 739).